The following is a 185-amino-acid chain: Regulator of rDNA transcription protein 13 (185 aa).

WD repeat units lie at residues 9-48 (GHTD…NNGE), 71-108 (GHRA…LKHF), and 111-148 (HTQL…LVRS).

May be involved in the modulation of rDNA transcription. The sequence is that of Regulator of rDNA transcription protein 13 (RRT13) from Saccharomyces cerevisiae (strain ATCC 204508 / S288c) (Baker's yeast).